We begin with the raw amino-acid sequence, 240 residues long: Small ribosomal subunit protein uS2 (240 aa).

Belongs to the universal ribosomal protein uS2 family.

The polypeptide is Small ribosomal subunit protein uS2 (Wigglesworthia glossinidia brevipalpis).